Here is a 612-residue protein sequence, read N- to C-terminus: Threonine--tRNA ligase (612 aa).

A catalytic region spans residues 218-509 (NHRKLGVELG…LSEHFGGNFP (292 aa)). Positions 310, 361, and 486 each coordinate Zn(2+).

Belongs to the class-II aminoacyl-tRNA synthetase family. In terms of assembly, homodimer. It depends on Zn(2+) as a cofactor.

It localises to the cytoplasm. It catalyses the reaction tRNA(Thr) + L-threonine + ATP = L-threonyl-tRNA(Thr) + AMP + diphosphate + H(+). Its function is as follows. Catalyzes the attachment of threonine to tRNA(Thr) in a two-step reaction: L-threonine is first activated by ATP to form Thr-AMP and then transferred to the acceptor end of tRNA(Thr). Also edits incorrectly charged L-seryl-tRNA(Thr). The protein is Threonine--tRNA ligase of Helicobacter pylori (strain Shi470).